The chain runs to 494 residues: GPI alpha-1,6-mannosyltransferase 2 (494 aa).

Residues 1–13 (MWSLDPSQKEVLR) lie on the Cytoplasmic side of the membrane. Residues 14–34 (FAVSCRILTLMLQALFNIIIP) traverse the membrane as a helical segment. Over 35–77 (DHHADAFSPPRLASSCSVDQLVEGLLGGLSRWDAEHFLFIAEH) the chain is Lumenal. A helical transmembrane segment spans residues 78 to 98 (GYLYEHNFAFFPGFPLALLMG). Residues 99–113 (TELLRPLQGLLSQRS) lie on the Cytoplasmic side of the membrane. The chain crosses the membrane as a helical span at residues 114–134 (CLLVSVALLNFLFSVLAAVTL). The Lumenal segment spans residues 135–136 (HD). A helical membrane pass occupies residues 137–157 (LGCLVLGCPRQAFYAAMLFCL). Over 158 to 161 (SPAN) the chain is Cytoplasmic. The helical transmembrane segment at 162–182 (VFLAAGYSEALFAFLTFSAMG) threads the bilayer. The Lumenal portion of the chain corresponds to 183 to 192 (QLERGRSWAS). A helical membrane pass occupies residues 193 to 213 (GLLFALATGVRSNGLVSVGFL). The Cytoplasmic segment spans residues 214 to 234 (LHAQCRGFFSSLVVLNPLKPL). A helical membrane pass occupies residues 235–255 (FKLMASLCLSVLTVSLPFALF). Topologically, residues 256–327 (QYYAYTQFCL…RYYELRQVPN (72 aa)) are lumenal. Residues 328 to 348 (FLLATPVAVLVVWAAWTYVTT) traverse the membrane as a helical segment. The Cytoplasmic portion of the chain corresponds to 349 to 379 (HPWLCLTLGLRRSKDSKKTLEKPHPGFLSPK). The chain crosses the membrane as a helical span at residues 380–400 (VFVYLVHAAGLLLFGSLCMHV). Topologically, residues 401–470 (QVLTRLLCSS…NWRACSPVTR (70 aa)) are lumenal. Residues 471–491 (CILGYFLTYWLLGLLLHCNFL) form a helical membrane-spanning segment. Over 492–494 (PWT) the chain is Cytoplasmic.

The protein belongs to the PIGV family. Post-translationally, not N-glycosylated.

It is found in the endoplasmic reticulum membrane. The protein operates within glycolipid biosynthesis; glycosylphosphatidylinositol-anchor biosynthesis. Functionally, alpha-1,6-mannosyltransferase that catalyzes the transfer of the second mannose, via an alpha-1,6 bond, from a dolichol-phosphate-mannose (Dol-P-Man) to the alpha-D-Man-(1-&gt;4)-alpha-D-GlcN-(1-&gt;6)-(1-radyl,2-acyl-sn-glycero-3-phospho)-2-acyl-inositol intermediate to generate an alpha-D-Man-(1-&gt;6)-alpha-D-Man-(1-&gt;4)-alpha-D-GlcN-(1-&gt;6)-(1-radyl,2-acyl-sn-glycero-3-phospho)-2-acyl-inositol and participates in the seventh step of the glycosylphosphatidylinositol-anchor biosynthesis. Also transfers the second mannose on a 2-PEtn-alpha-D-Man-(1-&gt;4)-alpha-D-GlcN-(1-&gt;6)-(1-radyl,2-acyl-sn-glycero-3-phospho)-2-acyl-inositol. The polypeptide is GPI alpha-1,6-mannosyltransferase 2 (Cricetulus griseus (Chinese hamster)).